We begin with the raw amino-acid sequence, 171 residues long: Co-chaperone protein HscB homolog (171 aa).

Positions 3–75 constitute a J domain; that stretch reads SHFALFDLEP…SQRARYLLSL (73 aa).

The protein belongs to the HscB family. In terms of assembly, interacts with HscA and stimulates its ATPase activity.

In terms of biological role, co-chaperone involved in the maturation of iron-sulfur cluster-containing proteins. Seems to help targeting proteins to be folded toward HscA. This is Co-chaperone protein HscB homolog from Azotobacter vinelandii.